The sequence spans 561 residues: Oxygen-dependent choline dehydrogenase (561 aa).

6–35 (DYIIIGAGSAGNVLATRLTEDADVSVLLLE) contributes to the FAD binding site. The Proton acceptor role is filled by H475.

Belongs to the GMC oxidoreductase family. It depends on FAD as a cofactor.

The catalysed reaction is choline + A = betaine aldehyde + AH2. It catalyses the reaction betaine aldehyde + NAD(+) + H2O = glycine betaine + NADH + 2 H(+). It functions in the pathway amine and polyamine biosynthesis; betaine biosynthesis via choline pathway; betaine aldehyde from choline (cytochrome c reductase route): step 1/1. Its function is as follows. Involved in the biosynthesis of the osmoprotectant glycine betaine. Catalyzes the oxidation of choline to betaine aldehyde and betaine aldehyde to glycine betaine at the same rate. This chain is Oxygen-dependent choline dehydrogenase, found in Pseudomonas aeruginosa (strain LESB58).